Consider the following 334-residue polypeptide: Nucleoid-associated protein YPK_2796 (334 aa).

It belongs to the YejK family.

Its subcellular location is the cytoplasm. The protein localises to the nucleoid. This is Nucleoid-associated protein YPK_2796 from Yersinia pseudotuberculosis serotype O:3 (strain YPIII).